We begin with the raw amino-acid sequence, 600 residues long: MATEHIENKLKLLPDKPGCYLMKDINGNVIYVGKSKNLKNRVRSYFKSKQVGRRAELVREIRDFDIITVSSDKESFLLEITLIKKYQPYYNVQLKQGTGYPYIEITNERDPQTRLTSFVHKDHGYYFGPYPNVYAAQATLKFIQKVWPLRRCSGHQGRPCLYYHMGQCLGACFKEVPKSAYDKQIRKIKRFLNGDISQVKQDLTEKMTQASMNLEFERAAEFRDQLKYIEQTVEKQKIISNDHTQRDIFNFYVDKSWISIQVFFLRQAKLLRRETRLFPLTDTNEPQDAFVSFIAQFYGQRNRVLPKEVLVPAGIDNEALAEVLGVAVRTPQRGQKRALLEMAHDNAKLKLDEKFRLLELGNRKTKGAQKEIFDALGLPYGHRIESFDHSHIQGADPVSALVVFTDGEPDKHEYRKYKLKGEVEHQNAADEVGNTREVVRRRYSRLLKEHKKMPDLILMDGGQIQVDACLDVLRNELNVNIPVAGMVKDDHHRTNHLIFGDPTQGEELKLIPLNPKSEGFYLMTRIQDEVHRFAITFHRRTHAKNALSSKLDEIKGIGPKSRNKLLRKFGSLKKIKEASIEELRDAGLTLPQAQTVKLSL.

Residues D15–V92 form the GIY-YIG domain. Residues S197–T232 enclose the UVR domain.

This sequence belongs to the UvrC family. In terms of assembly, interacts with UvrB in an incision complex.

Its subcellular location is the cytoplasm. Its function is as follows. The UvrABC repair system catalyzes the recognition and processing of DNA lesions. UvrC both incises the 5' and 3' sides of the lesion. The N-terminal half is responsible for the 3' incision and the C-terminal half is responsible for the 5' incision. This is UvrABC system protein C from Lactobacillus gasseri (strain ATCC 33323 / DSM 20243 / BCRC 14619 / CIP 102991 / JCM 1131 / KCTC 3163 / NCIMB 11718 / NCTC 13722 / AM63).